The primary structure comprises 324 residues: Dolichyl-phosphate beta-glucosyltransferase (324 aa).

The Lumenal portion of the chain corresponds to 1–7 (MAPLLLQ). A helical; Signal-anchor for type II membrane protein transmembrane segment spans residues 8 to 28 (LAVLGAALAAAALVLISIVAF). Topologically, residues 29-324 (TTATKMPALH…WRLEQTRKMN (296 aa)) are cytoplasmic.

This sequence belongs to the glycosyltransferase 2 family. Expressed in pancreas, placenta, liver, heart, brain, kidney, skeletal muscle, and lung.

It is found in the endoplasmic reticulum membrane. It carries out the reaction a di-trans,poly-cis-dolichyl phosphate + UDP-alpha-D-glucose = a di-trans,poly-cis-dolichyl beta-D-glucosyl phosphate + UDP. It participates in protein modification; protein glycosylation. In terms of biological role, dolichyl-phosphate beta-glucosyltransferase that operates in the biosynthetic pathway of dolichol-linked oligosaccharides, the glycan precursors employed in protein asparagine (N)-glycosylation. The assembly of dolichol-linked oligosaccharides begins on the cytosolic side of the endoplasmic reticulum membrane and finishes in its lumen. The sequential addition of sugars to dolichol pyrophosphate produces dolichol-linked oligosaccharides containing fourteen sugars, including two GlcNAcs, nine mannoses and three glucoses. Once assembled, the oligosaccharide is transferred from the lipid to nascent proteins by oligosaccharyltransferases. Dolichyl-phosphate beta-glucosyltransferase produces dolichyl beta-D-glucosyl phosphate/Dol-P-Glc, the glucose donor substrate used sequentially by ALG6, ALG8 and ALG10 to add glucose residues on top of the Man(9)GlcNAc(2)-PP-Dol structure. These are the three last steps in the biosynthetic pathway of dolichol-linked oligosaccharides to produce Glc(3)Man(9)GlcNAc(2)-PP-Dol. The enzyme is most probably active on the cytoplasmic side of the endoplasmic reticulum while its product Dol-P-Glc is the substrate for ALG6, ALG8 and ALG11 in the lumen of the endoplasmic reticulum. This is Dolichyl-phosphate beta-glucosyltransferase from Homo sapiens (Human).